The chain runs to 89 residues: Small ribosomal subunit protein bS16c (89 aa).

The protein belongs to the bacterial ribosomal protein bS16 family.

The protein resides in the plastid. It localises to the chloroplast. This is Small ribosomal subunit protein bS16c from Drimys granadensis.